A 477-amino-acid chain; its full sequence is Tripartite motif-containing protein 72 (477 aa).

Zn(2+) is bound by residues cysteine 14, cysteine 17, cysteine 29, histidine 31, cysteine 34, cysteine 37, cysteine 53, cysteine 56, cysteine 86, histidine 89, cysteine 97, aspartate 100, cysteine 105, cysteine 108, histidine 114, and histidine 117. The segment at 14–57 (CPLCLQLFDAPVTAECGHSFCRACLSRVAGEPAADGTVNCPCCQ) adopts an RING-type zinc-finger fold. The B box-type zinc-finger motif lies at 81–122 (VPQGHCEEHLDPLSIYCEQDRVLVCGVCASLGSHRGHRLLPA). Residues 135 to 232 (QQKLQLQEAS…EKVLEEVADK (98 aa)) adopt a coiled-coil conformation. Residue serine 255 is modified to Phosphoserine. A B30.2/SPRY domain is found at 271–475 (DFKFQVWRKM…PLLLVGPDGQ (205 aa)).

The protein belongs to the TRIM/RBCC family. Homodimer. Homooligomer; disulfide-linked. Oligomerizes on the phospholipid membrane. Interacts with DYSF and CAV3. Disulfide bond formation at Cys-242 occurs in case of membrane damage that cause the entry of the oxidized milieu of the extracellular space, resulting in homooligomerization. As to expression, muscle-specific.

Its subcellular location is the cell membrane. It localises to the sarcolemma. The protein localises to the cytoplasmic vesicle membrane. The enzyme catalyses S-ubiquitinyl-[E2 ubiquitin-conjugating enzyme]-L-cysteine + [acceptor protein]-L-lysine = [E2 ubiquitin-conjugating enzyme]-L-cysteine + N(6)-ubiquitinyl-[acceptor protein]-L-lysine.. It participates in protein modification; protein ubiquitination. Its activity is regulated as follows. Specifically binds phosphatidylserine. The binding to phospholipids enhances ubiquitination activity. Functionally, muscle-specific E3 ubiquitin-protein ligase that plays a central role in cell membrane repair by nucleating the assembly of the repair machinery at injury sites. Its ubiquitination activity is mediated by E2 ubiquitin-conjugating enzymes UBE2D1, UBE2D2 and UBE2D3. Acts as a sensor of oxidation: upon membrane damage, entry of extracellular oxidative environment results in disulfide bond formation and homooligomerization at the injury site. This oligomerization acts as a nucleation site for recruitment of TRIM72-containing vesicles to the injury site, leading to membrane patch formation. Probably acts upstream of the Ca(2+)-dependent membrane resealing process. Required for transport of DYSF to sites of cell injury during repair patch formation. Regulates membrane budding and exocytosis. May be involved in the regulation of the mobility of KCNB1-containing endocytic vesicles. This chain is Tripartite motif-containing protein 72, found in Oryctolagus cuniculus (Rabbit).